The chain runs to 611 residues: MSNSHPLRPFTAVGEIDHVHILSEHIGALLIGEEYGDVTFVVEKKRFPAHRVILAARCQYFRALLYGGMRESQPEAEIPLEDTTAEAFTMLLKYIYTGRATLTDEKEEVLLDFLSLAHKYGFPELEDSTSEYLCTILNIQNVCMTFDVASLYSLPKLTCMCCMFMDRNAQEVLSSEGFLSLSKTALLNIVLRDSFAAPEKDIFLALLNWCKHNSNENHAEIMQAVRLPLMSLTELLNVVRPSGLLSPDAILDAIKVRSESRDMDLNYRGMLIPEENIATMKYGAQVVKGELKSALLDGDTQNYDLDHGFSRHPIDDDCRSGIEIKLGQPSIINHIRILLWDRDSRSYSYFIEVSMDELDWIRVIDHSQYLCRSWQKLYFPARVCRYIRIVGTHNTVNKIFHIVAFECMFTNKTFTLEKGLIVPMENVATIADCASVIEGVSRSRNALLNGDTKNYDWDSSYTCHQLGSGAIVVQLAQPYMIGSIRLLLWDCDDRSYSYYVEVSTNQQQWTMVADRTKVSCKSWQSVTFERRPASFIRIVGTHNTANEVFHCVHFECPEQQSAQKDSSDEPGTGGASAAGQQLDPHALQAPSGSSLPSSPGSNSRSPNRQHQ.

The BTB domain occupies 36–104 (GDVTFVVEKK…IYTGRATLTD (69 aa)). Residues 142–240 (VCMTFDVASL…SLTELLNVVR (99 aa)) enclose the BACK domain. Positions 560 to 611 (QSAQKDSSDEPGTGGASAAGQQLDPHALQAPSGSSLPSSPGSNSRSPNRQHQ) are disordered. Positions 586–611 (ALQAPSGSSLPSSPGSNSRSPNRQHQ) are enriched in low complexity.

The protein is BTB/POZ domain-containing protein 9 (BTBD9) of Bos taurus (Bovine).